Reading from the N-terminus, the 645-residue chain is Exoribonuclease 2 (645 aa).

An RNB domain is found at R191–I517. An S1 motif domain is found at H563–V645.

It belongs to the RNR ribonuclease family. RNase II subfamily.

The protein resides in the cytoplasm. It carries out the reaction Exonucleolytic cleavage in the 3'- to 5'-direction to yield nucleoside 5'-phosphates.. Its function is as follows. Involved in mRNA degradation. Hydrolyzes single-stranded polyribonucleotides processively in the 3' to 5' direction. The sequence is that of Exoribonuclease 2 from Baumannia cicadellinicola subsp. Homalodisca coagulata.